A 506-amino-acid polypeptide reads, in one-letter code: Ecdysteroid UDP-glucosyltransferase (506 aa).

Residues 1–18 (MTILCWLALLSTLTAVNA) form the signal peptide.

Belongs to the UDP-glycosyltransferase family. Glycosylated.

Its function is as follows. Catalyzes the transfer of glucose from UDP-glucose to ecdysteroids which are insect molting hormones. Acts on the host at the organismal level to block its development, thereby increasing the yield of progeny virus. This chain is Ecdysteroid UDP-glucosyltransferase (EGT), found in Lepidoptera (butterflies and moths).